The following is a 182-amino-acid chain: Large ribosomal subunit protein uL5 (182 aa).

The protein belongs to the universal ribosomal protein uL5 family. Part of the 50S ribosomal subunit; part of the 5S rRNA/L5/L18/L25 subcomplex. Contacts the 5S rRNA and the P site tRNA. Forms a bridge to the 30S subunit in the 70S ribosome.

Its function is as follows. This is one of the proteins that bind and probably mediate the attachment of the 5S RNA into the large ribosomal subunit, where it forms part of the central protuberance. In the 70S ribosome it contacts protein S13 of the 30S subunit (bridge B1b), connecting the 2 subunits; this bridge is implicated in subunit movement. Contacts the P site tRNA; the 5S rRNA and some of its associated proteins might help stabilize positioning of ribosome-bound tRNAs. The chain is Large ribosomal subunit protein uL5 from Acidobacterium capsulatum (strain ATCC 51196 / DSM 11244 / BCRC 80197 / JCM 7670 / NBRC 15755 / NCIMB 13165 / 161).